Reading from the N-terminus, the 149-residue chain is Protein GR6 (149 aa).

Expressed in fetus (aged from 7 to 8 weeks). Weakly expressed in lymphocytes.

In Homo sapiens (Human), this protein is Protein GR6.